We begin with the raw amino-acid sequence, 102 residues long: uncharacterized protein (102 aa).

The HTH cro/C1-type domain maps to 48-102 (LNDKRKSLGIELSMLELQTGVSISTLNRLFQDPSQVRFTTVFLVAQTLGVSLCAI). The segment at residues 59–78 (LSMLELQTGVSISTLNRLFQ) is a DNA-binding region (H-T-H motif).

This is an uncharacterized protein from Haemophilus influenzae (strain ATCC 51907 / DSM 11121 / KW20 / Rd).